A 434-amino-acid chain; its full sequence is Chaperone SurA (434 aa).

The N-terminal stretch at 1-22 (MKKWKSSLLGIAIWSLAASSMA) is a signal peptide. PpiC domains are found at residues 173-274 (TVQF…KVND) and 283-383 (VTEV…EVLD).

It localises to the periplasm. It carries out the reaction [protein]-peptidylproline (omega=180) = [protein]-peptidylproline (omega=0). In terms of biological role, chaperone involved in the correct folding and assembly of outer membrane proteins. Recognizes specific patterns of aromatic residues and the orientation of their side chains, which are found more frequently in integral outer membrane proteins. May act in both early periplasmic and late outer membrane-associated steps of protein maturation. In Photobacterium profundum (strain SS9), this protein is Chaperone SurA.